We begin with the raw amino-acid sequence, 426 residues long: Glutamate-1-semialdehyde 2,1-aminomutase (426 aa).

N6-(pyridoxal phosphate)lysine is present on Lys-265.

It belongs to the class-III pyridoxal-phosphate-dependent aminotransferase family. HemL subfamily. Homodimer. The cofactor is pyridoxal 5'-phosphate.

The protein resides in the cytoplasm. It carries out the reaction (S)-4-amino-5-oxopentanoate = 5-aminolevulinate. It participates in porphyrin-containing compound metabolism; protoporphyrin-IX biosynthesis; 5-aminolevulinate from L-glutamyl-tRNA(Glu): step 2/2. The chain is Glutamate-1-semialdehyde 2,1-aminomutase from Escherichia coli O81 (strain ED1a).